Reading from the N-terminus, the 442-residue chain is Probable serine/threonine-protein kinase PBL17 (442 aa).

A lipid anchor (N-myristoyl glycine) is attached at Gly-2. Residue Cys-4 is the site of S-palmitoyl cysteine attachment. Thr-79 carries the phosphothreonine modification. One can recognise a Protein kinase domain in the interval 90 to 370; that stretch reads FRPDYILGEG…NHVVEVLETL (281 aa). ATP-binding positions include 96 to 104 and Lys-125; that span reads LGEGGFGVV. Tyr-170 is modified (phosphotyrosine). The active-site Proton acceptor is the Asp-220. Ser-254 bears the Phosphoserine mark. Phosphothreonine occurs at positions 255 and 260. At Tyr-268 the chain carries Phosphotyrosine. The segment at 385-442 is disordered; the sequence is HSRGKSVTLYEASSDSQGTRDGNGQRRRRPESGRSKSEAAVDTEKYVSTLSEPDTTKI. Residues 395-406 are compositionally biased toward polar residues; it reads EASSDSQGTRDG. Residues 414 to 429 show a composition bias toward basic and acidic residues; it reads PESGRSKSEAAVDTEK. Residues 430–442 show a composition bias toward polar residues; the sequence is YVSTLSEPDTTKI.

This sequence belongs to the protein kinase superfamily. Ser/Thr protein kinase family.

The protein localises to the cell membrane. It catalyses the reaction L-seryl-[protein] + ATP = O-phospho-L-seryl-[protein] + ADP + H(+). The catalysed reaction is L-threonyl-[protein] + ATP = O-phospho-L-threonyl-[protein] + ADP + H(+). Its function is as follows. May be involved in plant defense signaling. In Arabidopsis thaliana (Mouse-ear cress), this protein is Probable serine/threonine-protein kinase PBL17.